The primary structure comprises 931 residues: MTLAPADLPVSLQPLVDRALARLAQVLTEPIPADLLPLLTRLAVASDFALDTLVRQPALLAQLAAPGCPPIPAPVLDPLQPSDWPAQLRRWRAAMSTRLIWRDLAGLDDVAQTLAGATTLAEDCLRLALEALQQEFAQRHGVIADDQGTPQQLVVFGLGKLGGGELNFSSDIDLVYAYPHGGESDGPRALAAEEYFARLGQRLAKLLDETTVDGFSHRVDLRLRPFGSAGRVALSFAAMDQYFQREGRDWERYAWLKARAVAGDIAAGEAWLQTLRPFVYRRYLDFTALDGLREMKAAITAEVARRELHEDIKRGAGGIREIEFLCQALQLIRGGREPALRERRLLVALDALVAAGQIAPEDGSALREAYLFLRRLENRLQMLRDAQTHVLPSDALDRERIAVGLGYADWNVLRAALAEQQQRVSTEFAALLAPRKGQAAPDALANYWRSLPEGSNAPLLAEAGFLDANGADQSLRDFAQGTGVKSLSDAARARLDRVLPALLHAATRSPQPDAALKRVLGLLQAVLRRTSYLALLDEQPSALARLVDVLARSALLAERLAAYPLLLDELLDVRVSGPMPDAAGMLAECQQVLAVEDPESALRWLNETRLALSFRMAMATLDGRQGAVDSTRQLAELAQAVVVTVLAMAEADMHAAHGGIPGGRFAIIGYGSLGGLELGFGSDLDLVFLHDNPAGVDASDGARPLEPGRWYARLAQKVMALLGAVTAAGRLYDIDVRLRPDGGKGSLVSSLASYTEYQRERAWTWEHQALVRARGVAGDASLLADFEQVRAQTLGRERDTGVLYADVLKMRGRMRTELDRSDAARLDLKQGAGGVVDLEFLLQTGVLARSAQHAALLQPRDTPSLIDALAVAGFLPDATAQALHGAHATLLDVGLACTLDRRPRLAPTTPAIEEACAAITAACRAAELPFA.

The segment at 1-434 is adenylyl removase; the sequence is MTLAPADLPV…STEFAALLAP (434 aa). An adenylyl transferase region spans residues 441–931; that stretch reads PDALANYWRS…ACRAAELPFA (491 aa).

Belongs to the GlnE family. It depends on Mg(2+) as a cofactor.

It carries out the reaction [glutamine synthetase]-O(4)-(5'-adenylyl)-L-tyrosine + phosphate = [glutamine synthetase]-L-tyrosine + ADP. It catalyses the reaction [glutamine synthetase]-L-tyrosine + ATP = [glutamine synthetase]-O(4)-(5'-adenylyl)-L-tyrosine + diphosphate. Involved in the regulation of glutamine synthetase GlnA, a key enzyme in the process to assimilate ammonia. When cellular nitrogen levels are high, the C-terminal adenylyl transferase (AT) inactivates GlnA by covalent transfer of an adenylyl group from ATP to specific tyrosine residue of GlnA, thus reducing its activity. Conversely, when nitrogen levels are low, the N-terminal adenylyl removase (AR) activates GlnA by removing the adenylyl group by phosphorolysis, increasing its activity. The regulatory region of GlnE binds the signal transduction protein PII (GlnB) which indicates the nitrogen status of the cell. This chain is Bifunctional glutamine synthetase adenylyltransferase/adenylyl-removing enzyme, found in Stenotrophomonas maltophilia (strain K279a).